A 168-amino-acid polypeptide reads, in one-letter code: Peptide deformylase 1 (168 aa).

Residues Cys92 and His134 each contribute to the Fe cation site. The active site involves Glu135. His138 provides a ligand contact to Fe cation.

Belongs to the polypeptide deformylase family. Requires Fe(2+) as cofactor.

The enzyme catalyses N-terminal N-formyl-L-methionyl-[peptide] + H2O = N-terminal L-methionyl-[peptide] + formate. Its function is as follows. Removes the formyl group from the N-terminal Met of newly synthesized proteins. Requires at least a dipeptide for an efficient rate of reaction. N-terminal L-methionine is a prerequisite for activity but the enzyme has broad specificity at other positions. The protein is Peptide deformylase 1 of Pseudomonas syringae pv. tomato (strain ATCC BAA-871 / DC3000).